The following is a 141-amino-acid chain: Small ribosomal subunit protein bS6 (141 aa).

Residues 97-141 are disordered; the sequence is TGQSEMLKAEENRSERRERRDRPEHADSADGDDSDNSDASDNADE. Over residues 103-124 the composition is skewed to basic and acidic residues; sequence LKAEENRSERRERRDRPEHADS. Over residues 125–141 the composition is skewed to acidic residues; it reads ADGDDSDNSDASDNADE.

The protein belongs to the bacterial ribosomal protein bS6 family.

Functionally, binds together with bS18 to 16S ribosomal RNA. This chain is Small ribosomal subunit protein bS6, found in Pseudomonas fluorescens (strain ATCC BAA-477 / NRRL B-23932 / Pf-5).